A 547-amino-acid chain; its full sequence is Chaperonin GroEL (547 aa).

ATP is bound by residues 30 to 33 (TLGP), K51, 87 to 91 (DGTTT), G415, 478 to 480 (NAA), and D494.

It belongs to the chaperonin (HSP60) family. Forms a cylinder of 14 subunits composed of two heptameric rings stacked back-to-back. Interacts with the co-chaperonin GroES.

The protein resides in the cytoplasm. The catalysed reaction is ATP + H2O + a folded polypeptide = ADP + phosphate + an unfolded polypeptide.. Its function is as follows. Together with its co-chaperonin GroES, plays an essential role in assisting protein folding. The GroEL-GroES system forms a nano-cage that allows encapsulation of the non-native substrate proteins and provides a physical environment optimized to promote and accelerate protein folding. The protein is Chaperonin GroEL of Geobacter sp. (strain M21).